A 951-amino-acid chain; its full sequence is Valine--tRNA ligase (951 aa).

The short motif at proline 42–histidine 52 is the 'HIGH' region element. The 'KMSKS' region motif lies at lysine 554–serine 558. Lysine 557 serves as a coordination point for ATP. Residues alanine 880 to glutamine 944 adopt a coiled-coil conformation.

It belongs to the class-I aminoacyl-tRNA synthetase family. ValS type 1 subfamily. As to quaternary structure, monomer.

The protein resides in the cytoplasm. It catalyses the reaction tRNA(Val) + L-valine + ATP = L-valyl-tRNA(Val) + AMP + diphosphate. Functionally, catalyzes the attachment of valine to tRNA(Val). As ValRS can inadvertently accommodate and process structurally similar amino acids such as threonine, to avoid such errors, it has a 'posttransfer' editing activity that hydrolyzes mischarged Thr-tRNA(Val) in a tRNA-dependent manner. This chain is Valine--tRNA ligase (valS), found in Escherichia coli (strain K12).